Reading from the N-terminus, the 293-residue chain is Protease HtpX homolog (293 aa).

Transmembrane regions (helical) follow at residues 6–26 (VAVM…LIGG) and 28–48 (SGMV…YWNS). Histidine 130 lines the Zn(2+) pocket. The active site involves glutamate 131. Histidine 134 is a Zn(2+) binding site. A run of 2 helical transmembrane segments spans residues 145 to 165 (LTAT…FFGG) and 172 to 192 (PLGA…AMMV). Residue glutamate 201 participates in Zn(2+) binding.

This sequence belongs to the peptidase M48B family. Requires Zn(2+) as cofactor.

It is found in the cell inner membrane. In Rhodospirillum rubrum (strain ATCC 11170 / ATH 1.1.1 / DSM 467 / LMG 4362 / NCIMB 8255 / S1), this protein is Protease HtpX homolog.